A 145-amino-acid polypeptide reads, in one-letter code: Acidic phospholipase A2 1 (145 aa).

A signal peptide spans 1–21 (MYPAHLLVLLAVCVSLLGATA). Positions 22–27 (IPPLPL) are excised as a propeptide. 7 disulfide bridges follow: Cys38-Cys98, Cys54-Cys144, Cys56-Cys72, Cys71-Cys125, Cys78-Cys118, Cys87-Cys111, and Cys105-Cys116. Residues Tyr55, Gly57, and Gly59 each contribute to the Ca(2+) site. Residue His75 is part of the active site. Residue Asp76 coordinates Ca(2+). Asp119 is a catalytic residue.

The protein belongs to the phospholipase A2 family. Group I subfamily. D49 sub-subfamily. As to quaternary structure, monomer. Ca(2+) is required as a cofactor. As to expression, expressed by the venom gland.

The protein resides in the secreted. It catalyses the reaction a 1,2-diacyl-sn-glycero-3-phosphocholine + H2O = a 1-acyl-sn-glycero-3-phosphocholine + a fatty acid + H(+). In terms of biological role, PLA2 catalyzes the calcium-dependent hydrolysis of the 2-acyl groups in 3-sn-phosphoglycerides. This Laticauda semifasciata (Black-banded sea krait) protein is Acidic phospholipase A2 1.